Reading from the N-terminus, the 396-residue chain is Elongation factor Tu (396 aa).

The region spanning 10 to 205 (KPHVNIGTIG…AVDESIPAPV (196 aa)) is the tr-type G domain. The segment at 19-26 (GHVDHGKT) is G1. 19 to 26 (GHVDHGKT) provides a ligand contact to GTP. Threonine 26 serves as a coordination point for Mg(2+). Positions 62 to 66 (GITIN) are G2. Residues 83-86 (DAPG) form a G3 region. Residues 83-87 (DAPGH) and 138-141 (NKSD) each bind GTP. Residues 138 to 141 (NKSD) are G4. Residues 175 to 177 (SAL) form a G5 region.

Belongs to the TRAFAC class translation factor GTPase superfamily. Classic translation factor GTPase family. EF-Tu/EF-1A subfamily. In terms of assembly, monomer.

It localises to the cytoplasm. It carries out the reaction GTP + H2O = GDP + phosphate + H(+). In terms of biological role, GTP hydrolase that promotes the GTP-dependent binding of aminoacyl-tRNA to the A-site of ribosomes during protein biosynthesis. This is Elongation factor Tu from Mycobacterium leprae (strain Br4923).